Consider the following 68-residue polypeptide: Large ribosomal subunit protein uL29 (68 aa).

It belongs to the universal ribosomal protein uL29 family.

This Roseobacter denitrificans (strain ATCC 33942 / OCh 114) (Erythrobacter sp. (strain OCh 114)) protein is Large ribosomal subunit protein uL29.